Here is a 74-residue protein sequence, read N- to C-terminus: M-myrmeciitoxin-Mb1a (74 aa).

Positions 1–26 (MKLSCLLLTLAIIVVLTIVHAPNVEA) are cleaved as a signal peptide. Residues 27–50 (KALADPESDAVGFADAVGEADPNA) constitute a propeptide that is removed on maturation. Glutamine amide is present on Gln-73.

Belongs to the formicidae venom precursor-01 superfamily. Ant pilosulin family. Expressed by the venom gland.

It is found in the secreted. In terms of biological role, shows moderate activity against E.coli and S.aureus (MIC&lt;25 uM), slight activity against B.subtilis (MIC&lt;50 uM), and no activity against L.garvieae, P.aeruginosa, C.albicans, and S.cerevisiae. Has no hemolytic nor cytolytic activity. Causes an IgE-independent histamine release. This is M-myrmeciitoxin-Mb1a from Myrmecia banksi (Jack jumper ant).